We begin with the raw amino-acid sequence, 32 residues long: Photosystem II reaction center protein Z (32 aa).

Residues 9–31 (FILIGSASWAALVLLVGSLNSFV) traverse the membrane as a helical segment.

Belongs to the PsbZ family. PSII is composed of 1 copy each of membrane proteins PsbA, PsbB, PsbC, PsbD, PsbE, PsbF, PsbH, PsbI, PsbJ, PsbK, PsbL, PsbM, PsbT, PsbY, PsbZ, Psb30/Ycf12, at least 3 peripheral proteins of the oxygen-evolving complex and a large number of cofactors. It forms dimeric complexes.

The protein localises to the plastid. It localises to the chloroplast thylakoid membrane. May control the interaction of photosystem II (PSII) cores with the light-harvesting antenna, regulates electron flow through the 2 photosystem reaction centers. PSII is a light-driven water plastoquinone oxidoreductase, using light energy to abstract electrons from H(2)O, generating a proton gradient subsequently used for ATP formation. The sequence is that of Photosystem II reaction center protein Z from Euglena viridis (Cercaria viridis).